Consider the following 204-residue polypeptide: Thymidylate kinase (204 aa).

11-18 (GLDKSGKT) is an ATP binding site.

The protein belongs to the thymidylate kinase family.

The catalysed reaction is dTMP + ATP = dTDP + ADP. The protein operates within pyrimidine metabolism; dTTP biosynthesis. This chain is Thymidylate kinase (TMK), found in Vaccinia virus (strain Ankara) (VACV).